Reading from the N-terminus, the 343-residue chain is Dihydroorotase (343 aa).

The Zn(2+) site is built by H13 and H15. Substrate contacts are provided by residues 15 to 17 (HLR) and N41. Zn(2+)-binding residues include K99, H136, and H174. The residue at position 99 (K99) is an N6-carboxylysine. H136 lines the substrate pocket. L219 serves as a coordination point for substrate. D247 is a binding site for Zn(2+). D247 is a catalytic residue. 2 residues coordinate substrate: H251 and A263.

The protein belongs to the metallo-dependent hydrolases superfamily. DHOase family. Class II DHOase subfamily. As to quaternary structure, homodimer. It depends on Zn(2+) as a cofactor.

The enzyme catalyses (S)-dihydroorotate + H2O = N-carbamoyl-L-aspartate + H(+). It participates in pyrimidine metabolism; UMP biosynthesis via de novo pathway; (S)-dihydroorotate from bicarbonate: step 3/3. Its function is as follows. Catalyzes the reversible cyclization of carbamoyl aspartate to dihydroorotate. The chain is Dihydroorotase from Shewanella baltica (strain OS155 / ATCC BAA-1091).